The following is a 447-amino-acid chain: Probable glycine dehydrogenase (decarboxylating) subunit 1 (447 aa).

The protein belongs to the GcvP family. N-terminal subunit subfamily. In terms of assembly, the glycine cleavage system is composed of four proteins: P, T, L and H. In this organism, the P 'protein' is a heterodimer of two subunits.

The catalysed reaction is N(6)-[(R)-lipoyl]-L-lysyl-[glycine-cleavage complex H protein] + glycine + H(+) = N(6)-[(R)-S(8)-aminomethyldihydrolipoyl]-L-lysyl-[glycine-cleavage complex H protein] + CO2. Functionally, the glycine cleavage system catalyzes the degradation of glycine. The P protein binds the alpha-amino group of glycine through its pyridoxal phosphate cofactor; CO(2) is released and the remaining methylamine moiety is then transferred to the lipoamide cofactor of the H protein. The sequence is that of Probable glycine dehydrogenase (decarboxylating) subunit 1 from Bacillus thuringiensis subsp. konkukian (strain 97-27).